Reading from the N-terminus, the 341-residue chain is Serine/threonine-protein kinase PDIK1L (341 aa).

In terms of domain architecture, Protein kinase spans 8–334 (YDLIREVGRG…LELRLVQIAF (327 aa)). ATP contacts are provided by residues 14 to 22 (VGRGSYGVV) and Lys-37. The active-site Proton acceptor is Asp-164.

The protein belongs to the protein kinase superfamily. Ser/Thr protein kinase family. In terms of tissue distribution, expressed in liver, kidney, pancreas, spleen, thymus and prostate.

Its subcellular location is the nucleus. The catalysed reaction is L-seryl-[protein] + ATP = O-phospho-L-seryl-[protein] + ADP + H(+). It catalyses the reaction L-threonyl-[protein] + ATP = O-phospho-L-threonyl-[protein] + ADP + H(+). The protein is Serine/threonine-protein kinase PDIK1L (PDIK1L) of Homo sapiens (Human).